We begin with the raw amino-acid sequence, 49 residues long: Large ribosomal subunit protein bL33 (49 aa).

It belongs to the bacterial ribosomal protein bL33 family.

The polypeptide is Large ribosomal subunit protein bL33 (rpmG) (Thermotoga maritima (strain ATCC 43589 / DSM 3109 / JCM 10099 / NBRC 100826 / MSB8)).